Here is a 380-residue protein sequence, read N- to C-terminus: Cytochrome b (380 aa).

The next 4 helical transmembrane spans lie at 34-54 (FGSLLGLCLMTQILTGLLLAM), 78-99 (WLIRNLHANGASFFFICIYLHI), 114-134 (WNTGVILLLTLMATAFVGYVL), and 179-199 (FFALHFLLPFMIAGLTLIHLT). His84 and His98 together coordinate heme b. His183 and His197 together coordinate heme b. An a ubiquinone-binding site is contributed by His202. The next 4 helical transmembrane spans lie at 227 to 247 (TKDLLGFLLMIAPLLTLAMFS), 289 to 309 (LGGVLALAASVLILFLAPFLH), 321 to 341 (LSQLLFWILVANLLILTWVGS), and 348 to 368 (FIIIGQIASLTYFTILLILFP).

It belongs to the cytochrome b family. The cytochrome bc1 complex contains 11 subunits: 3 respiratory subunits (MT-CYB, CYC1 and UQCRFS1), 2 core proteins (UQCRC1 and UQCRC2) and 6 low-molecular weight proteins (UQCRH/QCR6, UQCRB/QCR7, UQCRQ/QCR8, UQCR10/QCR9, UQCR11/QCR10 and a cleavage product of UQCRFS1). This cytochrome bc1 complex then forms a dimer. The cofactor is heme b.

The protein localises to the mitochondrion inner membrane. Its function is as follows. Component of the ubiquinol-cytochrome c reductase complex (complex III or cytochrome b-c1 complex) that is part of the mitochondrial respiratory chain. The b-c1 complex mediates electron transfer from ubiquinol to cytochrome c. Contributes to the generation of a proton gradient across the mitochondrial membrane that is then used for ATP synthesis. This is Cytochrome b (MT-CYB) from Amazilia tzacatl (Rufous-tailed hummingbird).